Reading from the N-terminus, the 552-residue chain is Glutamine--tRNA ligase (552 aa).

The 'HIGH' region motif lies at Pro-34–His-44. ATP is bound by residues Glu-35–Asn-37 and His-41–Ser-47. Asp-67 and Tyr-212 together coordinate L-glutamine. ATP is bound by residues Thr-231, Arg-261 to Leu-262, and Met-269 to Lys-271. The 'KMSKS' region motif lies at Ile-268–Arg-272.

Belongs to the class-I aminoacyl-tRNA synthetase family. In terms of assembly, monomer.

It localises to the cytoplasm. The enzyme catalyses tRNA(Gln) + L-glutamine + ATP = L-glutaminyl-tRNA(Gln) + AMP + diphosphate. The protein is Glutamine--tRNA ligase of Aliivibrio salmonicida (strain LFI1238) (Vibrio salmonicida (strain LFI1238)).